Reading from the N-terminus, the 377-residue chain is Palmitoyltransferase ZDHHC16 (377 aa).

The Cytoplasmic segment spans residues 1–79 (MRGQWSLLLG…WLVDNVIRWC (79 aa)). A helical transmembrane segment spans residues 80-100 (GVVFVVLVIVLTSSIVAIAYL). At 101–116 (CVLPLILQTYSVPRLC) the chain is on the lumenal side. The chain crosses the membrane as a helical span at residues 117-137 (WHFFYSHWNLILIVFHYYQAI). Over 138–198 (TTPPGYPPQG…NNCVGHYNHR (61 aa)) the chain is Cytoplasmic. Positions 155 to 205 (SICKKCINPKPARTHHCSICNRCVLKMDHHCPWLNNCVGHYNHRYFFSFCF) constitute a DHHC domain. The active-site S-palmitoyl cysteine intermediate is the Cys-185. Residues 199 to 219 (YFFSFCFFMTLGCVYCSYGSW) form a helical membrane-spanning segment. Residues 220-266 (DLFREAYAAIEKMKQLDKNKLQAVANQTYHQTPPPTFSFRERVTHKS) lie on the Lumenal side of the membrane. A helical membrane pass occupies residues 267-287 (LVYLWFLCSSVALALGALTIW). Over 288-377 (HAVLISRGET…TAHSASVMAV (90 aa)) the chain is Cytoplasmic.

This sequence belongs to the DHHC palmitoyltransferase family. Interacts with ABL1. Interacts with COPS5/JAB1.

Its subcellular location is the endoplasmic reticulum membrane. The enzyme catalyses L-cysteinyl-[protein] + hexadecanoyl-CoA = S-hexadecanoyl-L-cysteinyl-[protein] + CoA. Functionally, palmitoyl acyltransferase that mediates palmitoylation of proteins such as PLN and ZDHHC6. Required during embryonic heart development and cardiac function, possibly by mediating palmitoylation of PLN, thereby affecting PLN phosphorylation and homooligomerization. Also required for eye development. Palmitoylates ZDHHC6, affecting the quaternary assembly of ZDHHC6, its localization, stability and function. May play a role in DNA damage response. May be involved in apoptosis regulation. Involved in the proliferation of neural stem cells by regulating the FGF/ERK pathway. This Bos taurus (Bovine) protein is Palmitoyltransferase ZDHHC16.